The sequence spans 396 residues: Lipid-A-disaccharide synthase (396 aa).

This sequence belongs to the LpxB family.

The catalysed reaction is a lipid X + a UDP-2-N,3-O-bis[(3R)-3-hydroxyacyl]-alpha-D-glucosamine = a lipid A disaccharide + UDP + H(+). It participates in bacterial outer membrane biogenesis; LPS lipid A biosynthesis. Functionally, condensation of UDP-2,3-diacylglucosamine and 2,3-diacylglucosamine-1-phosphate to form lipid A disaccharide, a precursor of lipid A, a phosphorylated glycolipid that anchors the lipopolysaccharide to the outer membrane of the cell. The protein is Lipid-A-disaccharide synthase of Hahella chejuensis (strain KCTC 2396).